A 494-amino-acid polypeptide reads, in one-letter code: Probable cytosol aminopeptidase (494 aa).

Residues K260 and D265 each contribute to the Mn(2+) site. Residue K272 is part of the active site. Residues D283, D342, and E344 each contribute to the Mn(2+) site. R346 is an active-site residue.

It belongs to the peptidase M17 family. Mn(2+) serves as cofactor.

It is found in the cytoplasm. The catalysed reaction is Release of an N-terminal amino acid, Xaa-|-Yaa-, in which Xaa is preferably Leu, but may be other amino acids including Pro although not Arg or Lys, and Yaa may be Pro. Amino acid amides and methyl esters are also readily hydrolyzed, but rates on arylamides are exceedingly low.. It catalyses the reaction Release of an N-terminal amino acid, preferentially leucine, but not glutamic or aspartic acids.. Presumably involved in the processing and regular turnover of intracellular proteins. Catalyzes the removal of unsubstituted N-terminal amino acids from various peptides. This Bacillus anthracis (strain CDC 684 / NRRL 3495) protein is Probable cytosol aminopeptidase.